A 403-amino-acid chain; its full sequence is Myeloid cell surface antigen CD33 (403 aa).

The N-terminal stretch at 1-16 is a signal peptide; it reads MLWPLPLFLLCAGSLA. An Ig-like V-type domain is found at 17 to 120; it reads QDLEFQLVAP…DTGMYFFRVV (104 aa). At 18-240 the chain is on the extracellular side; the sequence is DLEFQLVAPE…VTRKSGQMRE (223 aa). 3 disulfide bridges follow: cysteine 36–cysteine 169, cysteine 41–cysteine 100, and cysteine 163–cysteine 212. N-linked (GlcNAc...) asparagine glycosylation is present at asparagine 110. An N-acetylneuraminate-binding site is contributed by arginine 118. The Ig-like C2-type domain maps to 145-228; that stretch reads PDIIIPGTLE…AGVTVERTIQ (84 aa). Residue asparagine 160 is glycosylated (N-linked (GlcNAc...) asparagine). Asparagine 230 is a glycosylation site (N-linked (GlcNAc...) asparagine). The chain crosses the membrane as a helical span at residues 241–267; that stretch reads LVLVAVGEATVKLLILGLCLVFLIVMF. Residues 268 to 403 lie on the Cytoplasmic side of the membrane; the sequence is CRRKTTKLSV…MLLCVSLTLS (136 aa).

It belongs to the immunoglobulin superfamily. SIGLEC (sialic acid binding Ig-like lectin) family. Homodimer; disulfide-linked. Interacts with PTPN6/SHP-1 and PTPN11/SHP-2 upon phosphorylation. Interacts with C1QA (via C-terminus); this interaction activates CD33 inhibitory motifs. In terms of processing, glycosylated. Phosphorylation is involved in binding to PTPN6 and PTPN11. As to expression, expressed on myeloid precursors in the bone marrow. In the peripheral blood, mostly expressed on granulocytes.

Its subcellular location is the cell membrane. Functionally, sialic-acid-binding immunoglobulin-like lectin (Siglec) that plays a role in mediating cell-cell interactions and in maintaining immune cells in a resting state. Preferentially binds sialic acid to the short O-linked glycans of certain mucins. The protein is Myeloid cell surface antigen CD33 (Cd33) of Mus musculus (Mouse).